The primary structure comprises 751 residues: Conserved oligomeric Golgi complex subunit 5 (751 aa).

Disordered stretches follow at residues 1-21 and 244-263; these read MVTG…DDND and SPTH…KTPQ.

The protein belongs to the COG5 family. As to quaternary structure, component of the conserved oligomeric Golgi complex which is composed of eight different subunits and is required for normal Golgi morphology and localization.

It localises to the golgi apparatus membrane. In terms of biological role, required for normal Golgi function and necessary during spermatogenesis. Required for cleavage furrow ingression during cytokinesis in dividing spermatocytes and for the extensive polarized cell growth that accompanies spermatid elongation. The chain is Conserved oligomeric Golgi complex subunit 5 (fws) from Drosophila melanogaster (Fruit fly).